The primary structure comprises 182 residues: A-type ATP synthase subunit E (182 aa).

Belongs to the V-ATPase E subunit family. As to quaternary structure, has multiple subunits with at least A(3), B(3), C, D, E, F, H, I and proteolipid K(x).

The protein resides in the cell membrane. Its function is as follows. Component of the A-type ATP synthase that produces ATP from ADP in the presence of a proton gradient across the membrane. In Picrophilus torridus (strain ATCC 700027 / DSM 9790 / JCM 10055 / NBRC 100828 / KAW 2/3), this protein is A-type ATP synthase subunit E.